The primary structure comprises 141 residues: Hemoglobin subunit alpha-3 (141 aa).

A Globin domain is found at V1–R141. O2 is bound at residue H58. H87 contributes to the heme b binding site.

The protein belongs to the globin family. As to quaternary structure, heterotetramer of two alpha chains and two beta chains. As to expression, red blood cells.

Functionally, involved in oxygen transport from the lung to the various peripheral tissues. This chain is Hemoglobin subunit alpha-3, found in Pan troglodytes (Chimpanzee).